Here is a 297-residue protein sequence, read N- to C-terminus: uncharacterized protein (297 aa).

A run of 5 helical transmembrane segments spans residues 114–136, 150–170, 197–217, 227–247, and 269–289; these read YNRWLVVFMIGLSCAAFAHLSSG, LLYDMLFAAIPAVGFALVFNV, MPIVFATFFATCVIGFLGVHL, AFTVAAIIPMIPGVHAYKAMI, and FINTSFILGAIVFGLALPGLL.

The protein belongs to the ThrE exporter (TC 2.A.79) family.

The protein localises to the cell inner membrane. This is an uncharacterized protein from Haemophilus influenzae (strain ATCC 51907 / DSM 11121 / KW20 / Rd).